Reading from the N-terminus, the 159-residue chain is D-aminoacyl-tRNA deacylase (159 aa).

Positions 146–147 (GP) match the Gly-cisPro motif, important for rejection of L-amino acids motif.

It belongs to the DTD family. In terms of assembly, homodimer.

It is found in the cytoplasm. The catalysed reaction is glycyl-tRNA(Ala) + H2O = tRNA(Ala) + glycine + H(+). The enzyme catalyses a D-aminoacyl-tRNA + H2O = a tRNA + a D-alpha-amino acid + H(+). In terms of biological role, an aminoacyl-tRNA editing enzyme that deacylates mischarged D-aminoacyl-tRNAs. Also deacylates mischarged glycyl-tRNA(Ala), protecting cells against glycine mischarging by AlaRS. Acts via tRNA-based rather than protein-based catalysis; rejects L-amino acids rather than detecting D-amino acids in the active site. By recycling D-aminoacyl-tRNA to D-amino acids and free tRNA molecules, this enzyme counteracts the toxicity associated with the formation of D-aminoacyl-tRNA entities in vivo and helps enforce protein L-homochirality. The protein is D-aminoacyl-tRNA deacylase of Bifidobacterium adolescentis (strain ATCC 15703 / DSM 20083 / NCTC 11814 / E194a).